The primary structure comprises 354 residues: MAGSDEVNRNECKTVVPLHTWVLISNFKLSYNILRRADGTFERDLGEYLDRRVPANARPLEGVSSFDHIIDQSVGLEVRIYRAAAEGDAEEGAAAVTRPILEFLTDAPAAEPFPVIIFFHGGSFVHSSASSTIYDSLCRRFVKLSKGVVVSVNYRRAPEHRYPCAYDDGWTALKWVMSQPFMRSGGDAQARVFLSGDSSGGNIAHHVAVRAADEGVKVCGNILLNAMFGGTERTESERRLDGKYFVTLQDRDWYWKAYLPEDADRDHPACNPFGPNGRRLGGLPFAKSLIIVSGLDLTCDRQLAYADALREDGHHVKVVQCENATVGFYLLPNTVHYHEVMEEISDFLNANLYY.

The Involved in the stabilization of the negatively charged intermediate by the formation of the oxyanion hole signature appears at His-120–Gly-122. Gibberellin A3 is bound by residues Gly-122–Ser-123, Tyr-134, Ser-198, and Asp-250. Gibberellin A4 contacts are provided by residues Gly-122 to Ser-123, Tyr-134, and Ser-198. Residue Ser-198 is part of the active site. Residue Asp-296 is part of the active site. Residue Gly-327 participates in gibberellin A3 binding. A gibberellin A4-binding site is contributed by Gly-327.

Belongs to the 'GDXG' lipolytic enzyme family. In terms of assembly, interacts with the DELLA protein SLR1 in a GA-dependent manner, resulting in subsequent SLR1 degradation.

It is found in the nucleus. Its function is as follows. Functions as a soluble gibberellin (GA) receptor. GA is an essential hormone that regulates growth and development in plants. Binds with high affinity the biologically active GAs such as GA1, GA3 and GA4, but has low or no affinity for the biologically inactive GAs. Upon GA-binding, it interacts with the DELLA protein SLR1, a repressor of GA signaling. This leads to SLR1 degradation by the proteasome, allowing the GA signaling pathway. This is Gibberellin receptor GID1 from Oryza sativa subsp. japonica (Rice).